The following is a 262-amino-acid chain: Thrombin-like enzyme gyroxin B1.3 (262 aa).

Positions 1–18 (MVLIRVLANLLILQLSYA) are cleaved as a signal peptide. Residues 19–262 (QKSSELVIGG…AGSETVNCPS (244 aa)) constitute a propeptide that is removed on maturation. The region spanning 25–253 (VIGGDECNIN…HLDWIQNIIA (229 aa)) is the Peptidase S1 domain. Disulfide bonds link Cys31–Cys165, Cys52–Cys68, Cys102–Cys260, Cys144–Cys214, Cys176–Cys193, and Cys204–Cys229. His67 acts as the Charge relay system in catalysis. Asn105 is a glycosylation site (N-linked (GlcNAc...) asparagine). Asp112 acts as the Charge relay system in catalysis. Ser208 acts as the Charge relay system in catalysis.

The protein belongs to the peptidase S1 family. Snake venom subfamily. In terms of assembly, monomer. As to expression, expressed by the venom gland.

It localises to the secreted. Functionally, thrombin-like snake venom serine protease. Displays a specificity similar to trypsin. Releases only fibrinopeptide A in the conversion of fibrinogen to fibrin. Reversibly increases the permeability of the blood brain barrier (BBB) in mice. Induces the barrel rotation syndrome in mice, which is manifested by gyroxin-like, rapid rolling motions. This syndrome may be due to its effect on BBB permeability, and certainly also to other actions affecting endogenous substrates present in the endothelium, nervous tissues or blood. Also shows a moderate inhibitory activity on the human voltage-gated potassium channel Kv10.1/KCNH1/EAG1 (58% current inhibition at 5 uM). It blocks Kv10.1/KCNH1/EAG1 in a time and dose-dependent manner and with a mechanism independent of its enzymatic activity. It may have a preference in interacting with Kv10.1/KCNH1/EAG1 in its closed state, since the inhibitory effect of the toxin is decreased at more depolarized potentials. The chain is Thrombin-like enzyme gyroxin B1.3 from Crotalus durissus terrificus (South American rattlesnake).